We begin with the raw amino-acid sequence, 814 residues long: Pre-rRNA-processing protein TSR1 homolog (814 aa).

The segment at 1-67 (MADHAFHRPG…NQMNQLRKNK (67 aa)) is disordered. Positions 16-27 (NKAHKTGRHRSK) are enriched in basic residues. The region spanning 84–249 (APFLVCLLPM…MRRIGGQKKR (166 aa)) is the Bms1-type G domain. Disordered stretches follow at residues 316–357 (PYKL…DAEQ) and 392–448 (WIPD…EEFQ). Basic and acidic residues predominate over residues 317–340 (YKLDKSRDGENSEVRLLDRSDPSK). Residues 395-426 (DVEEVEDPDGKDDDDMSEDDDDDKEDDNEDFM) show a composition bias toward acidic residues. Positions 431–442 (KSFEDEYEKRDS) are enriched in basic and acidic residues. Thr-444 carries the post-translational modification Phosphothreonine.

It belongs to the TRAFAC class translation factor GTPase superfamily. Bms1-like GTPase family. TSR1 subfamily.

It localises to the nucleus. Its subcellular location is the nucleolus. Its function is as follows. Required during maturation of the 40S ribosomal subunit in the nucleolus. This Drosophila melanogaster (Fruit fly) protein is Pre-rRNA-processing protein TSR1 homolog.